A 182-amino-acid polypeptide reads, in one-letter code: NADH-quinone oxidoreductase subunit B (182 aa).

4 residues coordinate [4Fe-4S] cluster: Cys61, Cys62, Cys126, and Cys156.

The protein belongs to the complex I 20 kDa subunit family. NDH-1 is composed of 14 different subunits. Subunits NuoB, C, D, E, F, and G constitute the peripheral sector of the complex. Requires [4Fe-4S] cluster as cofactor.

The protein localises to the cell inner membrane. The enzyme catalyses a quinone + NADH + 5 H(+)(in) = a quinol + NAD(+) + 4 H(+)(out). Its function is as follows. NDH-1 shuttles electrons from NADH, via FMN and iron-sulfur (Fe-S) centers, to quinones in the respiratory chain. The immediate electron acceptor for the enzyme in this species is believed to be ubiquinone. Couples the redox reaction to proton translocation (for every two electrons transferred, four hydrogen ions are translocated across the cytoplasmic membrane), and thus conserves the redox energy in a proton gradient. In Xanthomonas oryzae pv. oryzae (strain PXO99A), this protein is NADH-quinone oxidoreductase subunit B.